Consider the following 95-residue polypeptide: Large ribosomal subunit protein eL37x (95 aa).

The Zn(2+) site is built by cysteine 19, cysteine 22, cysteine 34, and cysteine 37. A C4-type zinc finger spans residues 19–37 (CVRCGRRSFHIQKSRCSAC). The disordered stretch occupies residues 73–95 (RFKTGFREGTEAKPRSKASASSA). The segment covering 77–86 (GFREGTEAKP) has biased composition (basic and acidic residues).

Belongs to the eukaryotic ribosomal protein eL37 family. Requires Zn(2+) as cofactor.

In terms of biological role, binds to the 23S rRNA. This Arabidopsis thaliana (Mouse-ear cress) protein is Large ribosomal subunit protein eL37x (RPL37C).